The chain runs to 237 residues: Small ribosomal subunit protein uS3 (237 aa).

The 70-residue stretch at 17–86 folds into the KH type-2 domain; the sequence is VERHLGHELK…SPQIEVQQVD (70 aa).

This sequence belongs to the universal ribosomal protein uS3 family. In terms of assembly, part of the 30S ribosomal subunit.

Binds the lower part of the 30S subunit head. This Methanospirillum hungatei JF-1 (strain ATCC 27890 / DSM 864 / NBRC 100397 / JF-1) protein is Small ribosomal subunit protein uS3.